The chain runs to 423 residues: Serine hydroxymethyltransferase (423 aa).

(6S)-5,6,7,8-tetrahydrofolate-binding positions include leucine 118 and glycine 122–leucine 124. Lysine 227 carries the post-translational modification N6-(pyridoxal phosphate)lysine. Serine 351 to phenylalanine 353 provides a ligand contact to (6S)-5,6,7,8-tetrahydrofolate.

It belongs to the SHMT family. In terms of assembly, homodimer. It depends on pyridoxal 5'-phosphate as a cofactor.

The protein resides in the cytoplasm. It carries out the reaction (6R)-5,10-methylene-5,6,7,8-tetrahydrofolate + glycine + H2O = (6S)-5,6,7,8-tetrahydrofolate + L-serine. It functions in the pathway one-carbon metabolism; tetrahydrofolate interconversion. It participates in amino-acid biosynthesis; glycine biosynthesis; glycine from L-serine: step 1/1. In terms of biological role, catalyzes the reversible interconversion of serine and glycine with tetrahydrofolate (THF) serving as the one-carbon carrier. This reaction serves as the major source of one-carbon groups required for the biosynthesis of purines, thymidylate, methionine, and other important biomolecules. Also exhibits THF-independent aldolase activity toward beta-hydroxyamino acids, producing glycine and aldehydes, via a retro-aldol mechanism. The polypeptide is Serine hydroxymethyltransferase (Petrotoga mobilis (strain DSM 10674 / SJ95)).